The primary structure comprises 50 residues: U37-theraphotoxin-Cg1a (50 aa).

Residues 1-19 (MRVLLIIAGLALLSVVCYT) form the signal peptide.

The protein belongs to the neurotoxin 10 (Hwtx-1) family. 67 (Jztx-67) subfamily. As to expression, expressed by the venom gland.

Its subcellular location is the secreted. This chain is U37-theraphotoxin-Cg1a, found in Chilobrachys guangxiensis (Chinese earth tiger tarantula).